A 448-amino-acid polypeptide reads, in one-letter code: Glutamyl-tRNA reductase (448 aa).

Substrate-binding positions include 49–52 (TCNR), Ser-109, 114–116 (ETQ), and Gln-120. Residue Cys-50 is the Nucleophile of the active site. 189–194 (GAGEMS) lines the NADP(+) pocket.

The protein belongs to the glutamyl-tRNA reductase family. As to quaternary structure, homodimer.

The enzyme catalyses (S)-4-amino-5-oxopentanoate + tRNA(Glu) + NADP(+) = L-glutamyl-tRNA(Glu) + NADPH + H(+). The protein operates within porphyrin-containing compound metabolism; protoporphyrin-IX biosynthesis; 5-aminolevulinate from L-glutamyl-tRNA(Glu): step 1/2. Catalyzes the NADPH-dependent reduction of glutamyl-tRNA(Glu) to glutamate 1-semialdehyde (GSA). The polypeptide is Glutamyl-tRNA reductase (Staphylococcus haemolyticus (strain JCSC1435)).